A 354-amino-acid polypeptide reads, in one-letter code: Probable mannitol dehydrogenase 1 (354 aa).

Zn(2+)-binding residues include C43, H65, C96, C99, C102, C110, and C158.

Belongs to the zinc-containing alcohol dehydrogenase family. The cofactor is Zn(2+).

It carries out the reaction D-mannitol + NAD(+) = D-mannose + NADH + H(+). Functionally, oxidizes mannitol to mannose. Provides the initial step by which translocated mannitol is committed to central metabolism and, by regulating mannitol pool size, is important in regulating salt tolerance at the cellular level. The protein is Probable mannitol dehydrogenase 1 (CAD1) of Stylosanthes humilis (Townsville stylo).